A 204-amino-acid polypeptide reads, in one-letter code: UPF0637 protein LMHCC_1566 (204 aa).

This sequence belongs to the UPF0637 family.

The sequence is that of UPF0637 protein LMHCC_1566 from Listeria monocytogenes serotype 4a (strain HCC23).